Consider the following 318-residue polypeptide: CRISPR-associated protein Cas7/Csa2 1 (318 aa).

This sequence belongs to the CRISPR-associated protein Cas7/Cst2/DevR family. Subtype I-a/Apern subfamily. In terms of assembly, part of the aCascade ribonucleoprotein complex, minimally composed of Csa2 and Cas5a, which binds crRNA. Other possible components of aCascade in strain P1 are Cas6b (SSO1437) and Csa5 (SSO1443), while SSO1399, Cas5b (SSO1400) and SSO1401 have sometimes been seen weakly associated. Csa2 is probably the major RNA-binding subunit. The Csa2-Cas5a-crRNA complex also binds target DNA homologous to crRNA, probably forming an R-loop. Purified aCascade forms a filament about 6 nm in width.

Functionally, CRISPR (clustered regularly interspaced short palindromic repeat) is an adaptive immune system that provides protection against mobile genetic elements (viruses, transposable elements and conjugative plasmids). CRISPR clusters contain spacers, sequences complementary to antecedent mobile elements, and target invading nucleic acids. CRISPR clusters are transcribed and processed into CRISPR RNA (crRNA). This Saccharolobus solfataricus (strain ATCC 35092 / DSM 1617 / JCM 11322 / P2) (Sulfolobus solfataricus) protein is CRISPR-associated protein Cas7/Csa2 1 (cas7a).